The primary structure comprises 227 residues: Isopentenyl-diphosphate Delta-isomerase 1 (227 aa).

Lysine 36 provides a ligand contact to substrate. Residues histidine 40 and histidine 51 each contribute to the Mg(2+) site. The region spanning 49-199 (LLHRAFSVFL…EIKITPWFQI (151 aa)) is the Nudix hydrolase domain. 2 residues coordinate substrate: arginine 70 and lysine 74. Cysteine 86 is an active-site residue. Serine 87 contributes to the substrate binding site. The Mg(2+) site is built by glutamate 146 and glutamate 148. Glutamate 148 is an active-site residue. An N6-acetyllysine modification is found at lysine 176. Residues 225–227 (HRM) carry the Microbody targeting signal motif.

The protein belongs to the IPP isomerase type 1 family. As to quaternary structure, monomer. Requires Mg(2+) as cofactor.

The protein resides in the peroxisome. The catalysed reaction is isopentenyl diphosphate = dimethylallyl diphosphate. It functions in the pathway isoprenoid biosynthesis; dimethylallyl diphosphate biosynthesis; dimethylallyl diphosphate from isopentenyl diphosphate: step 1/1. Its function is as follows. Catalyzes the 1,3-allylic rearrangement of the homoallylic substrate isopentenyl (IPP) to its highly electrophilic allylic isomer, dimethylallyl diphosphate (DMAPP). The protein is Isopentenyl-diphosphate Delta-isomerase 1 (IDI1) of Macaca fascicularis (Crab-eating macaque).